A 704-amino-acid chain; its full sequence is Glycine--tRNA ligase beta subunit (704 aa).

The protein belongs to the class-II aminoacyl-tRNA synthetase family. Tetramer of two alpha and two beta subunits.

Its subcellular location is the cytoplasm. It carries out the reaction tRNA(Gly) + glycine + ATP = glycyl-tRNA(Gly) + AMP + diphosphate. This is Glycine--tRNA ligase beta subunit from Delftia acidovorans (strain DSM 14801 / SPH-1).